The primary structure comprises 250 residues: 5'/3'-nucleotidase SurE (250 aa).

A divalent metal cation-binding residues include aspartate 8, aspartate 9, serine 39, and asparagine 92.

This sequence belongs to the SurE nucleotidase family. It depends on a divalent metal cation as a cofactor.

The protein resides in the cytoplasm. The enzyme catalyses a ribonucleoside 5'-phosphate + H2O = a ribonucleoside + phosphate. It carries out the reaction a ribonucleoside 3'-phosphate + H2O = a ribonucleoside + phosphate. It catalyses the reaction [phosphate](n) + H2O = [phosphate](n-1) + phosphate + H(+). Nucleotidase with a broad substrate specificity as it can dephosphorylate various ribo- and deoxyribonucleoside 5'-monophosphates and ribonucleoside 3'-monophosphates with highest affinity to 3'-AMP. Also hydrolyzes polyphosphate (exopolyphosphatase activity) with the preference for short-chain-length substrates (P20-25). Might be involved in the regulation of dNTP and NTP pools, and in the turnover of 3'-mononucleotides produced by numerous intracellular RNases (T1, T2, and F) during the degradation of various RNAs. This chain is 5'/3'-nucleotidase SurE, found in Wigglesworthia glossinidia brevipalpis.